We begin with the raw amino-acid sequence, 258 residues long: UPF0246 protein YaaA (258 aa).

This sequence belongs to the UPF0246 family.

This Escherichia coli O7:K1 (strain IAI39 / ExPEC) protein is UPF0246 protein YaaA.